The chain runs to 628 residues: E3 SUMO-protein ligase PIAS3 (628 aa).

Positions 1–200 are interaction with CCAR2; the sequence is MAELGELKHM…QLRFCLCETS (200 aa). The 35-residue stretch at 11–45 folds into the SAP domain; it reads VMSFRVSELQVLLGFAGRNKSGRKHELLAKALHLL. Residues 19-23 carry the LXXLL motif motif; that stretch reads LQVLL. Glycyl lysine isopeptide (Lys-Gly) (interchain with G-Cter in SUMO2) cross-links involve residues Lys46, Lys56, Lys230, and Lys307. The region spanning 115 to 280 is the PINIT domain; the sequence is MHPPLPQPVH…SLSVYLVRQL (166 aa). The SP-RING-type zinc finger occupies 312-393; sequence PDSEVATTSL…FMEILNSCSD (82 aa). 4 residues coordinate Zn(2+): Cys343, His345, Cys366, and Cys369. Residues 450–460 form an SUMO1-binding region; it reads LTIESSSDEED. Glycyl lysine isopeptide (Lys-Gly) (interchain with G-Cter in SUMO2) cross-links involve residues Lys466 and Lys482. Residues 571 to 628 are disordered; it reads GPLAPTLGSSHRSSTPAPPPGRVSSIVAPGSSLREGHGGPLPSGPSLTGCRSDVISLD.

This sequence belongs to the PIAS family. Monomer. Interacts with PLAG1 and ZFHX3. Interacts with STAT5A; the interaction occurs on stimulation by PRL. Binds SUMO1 and UBE2I. Interacts with AR, BCL11A, HMGA2, IRF1 and NCOA2. Interacts with MITF; the interaction inhibits the transcriptional activity of MITF. Interacts with STAT3; the interaction occurs on stimulation by IL6, CNTF or OSM and inhibits the DNA binding activity of STAT3. Interacts with GFI1; the interaction relieves the inhibitory effect of PIAS3 on STAT3-mediated transcriptional activity. Interacts with MTA1. Interacts with CCAR2 (via N-terminus). Interacts with TRIM8. Interacts with PRDM1. Post-translationally, sumoylated. Expressed in kidney, heart, spleen, brain and cerebellum; weak expression, if any, in liver and lung.

It localises to the cytoplasm. The protein resides in the nucleus. Its subcellular location is the nucleus speckle. It functions in the pathway protein modification; protein sumoylation. Functions as an E3-type small ubiquitin-like modifier (SUMO) ligase, stabilizing the interaction between UBE2I and the substrate, and as a SUMO-tethering factor. Plays a crucial role as a transcriptional coregulation in various cellular pathways, including the STAT pathway and the steroid hormone signaling pathway. Repressor of STAT3 signaling via inhibiting STAT3 DNA-binding and suppressing cell growth. Repressor of MITF transcriptional activity. Enhances the sumoylation of MTA1 and may participate in its paralog-selective sumoylation. Sumoylates CCAR2 which promotes its interaction with SIRT1. Diminishes the sumoylation of ZFHX3 by preventing the colocalization of ZFHX3 with SUMO1 in the nucleus. In Mus musculus (Mouse), this protein is E3 SUMO-protein ligase PIAS3 (Pias3).